Reading from the N-terminus, the 197-residue chain is dCTP deaminase, dUMP-forming (197 aa).

DCTP is bound by residues 105-110, Asp-123, 131-133, Gln-152, Tyr-166, Lys-174, and Gln-178; these read RSSMGR and TLE. The Proton donor/acceptor role is filled by Glu-133.

This sequence belongs to the dCTP deaminase family. As to quaternary structure, homotrimer.

The enzyme catalyses dCTP + 2 H2O = dUMP + NH4(+) + diphosphate. It functions in the pathway pyrimidine metabolism; dUMP biosynthesis; dUMP from dCTP: step 1/1. In terms of biological role, bifunctional enzyme that catalyzes both the deamination of dCTP to dUTP and the hydrolysis of dUTP to dUMP without releasing the toxic dUTP intermediate. This is dCTP deaminase, dUMP-forming from Methanosphaera stadtmanae (strain ATCC 43021 / DSM 3091 / JCM 11832 / MCB-3).